Reading from the N-terminus, the 338-residue chain is Ketol-acid reductoisomerase (NADP(+)) (338 aa).

The KARI N-terminal Rossmann domain maps to 1–181 (MQVYYDKDCD…GGGRTGIIET (181 aa)). NADP(+) is bound by residues 24–27 (YGSQ), Arg47, Ser50, Ser52, and 82–85 (DEFQ). The active site involves His107. Gly133 is an NADP(+) binding site. The KARI C-terminal knotted domain occupies 182–327 (TFKDETETDL…EKLRSMMPWI (146 aa)). Residues Asp190, Glu194, Glu226, and Glu230 each coordinate Mg(2+). A substrate-binding site is contributed by Ser251.

The protein belongs to the ketol-acid reductoisomerase family. Mg(2+) is required as a cofactor.

It catalyses the reaction (2R)-2,3-dihydroxy-3-methylbutanoate + NADP(+) = (2S)-2-acetolactate + NADPH + H(+). The catalysed reaction is (2R,3R)-2,3-dihydroxy-3-methylpentanoate + NADP(+) = (S)-2-ethyl-2-hydroxy-3-oxobutanoate + NADPH + H(+). It functions in the pathway amino-acid biosynthesis; L-isoleucine biosynthesis; L-isoleucine from 2-oxobutanoate: step 2/4. It participates in amino-acid biosynthesis; L-valine biosynthesis; L-valine from pyruvate: step 2/4. Involved in the biosynthesis of branched-chain amino acids (BCAA). Catalyzes an alkyl-migration followed by a ketol-acid reduction of (S)-2-acetolactate (S2AL) to yield (R)-2,3-dihydroxy-isovalerate. In the isomerase reaction, S2AL is rearranged via a Mg-dependent methyl migration to produce 3-hydroxy-3-methyl-2-ketobutyrate (HMKB). In the reductase reaction, this 2-ketoacid undergoes a metal-dependent reduction by NADPH to yield (R)-2,3-dihydroxy-isovalerate. The polypeptide is Ketol-acid reductoisomerase (NADP(+)) (Hahella chejuensis (strain KCTC 2396)).